Consider the following 379-residue polypeptide: Epoxyqueuosine reductase (379 aa).

Asp-140 acts as the Proton donor in catalysis. One can recognise a 4Fe-4S ferredoxin-type domain in the interval 184–214; that stretch reads FEPDTPASDLCGSCNQCVKACPTGSLLGEGK. Positions 194, 197, 200, 204, 220, 246, 249, and 253 each coordinate [4Fe-4S] cluster. One copy of the HEAT-like PBS-type repeat lies at 307–332; it reads QRNAIIILARYKDKTAVPDLIDCLQN.

This sequence belongs to the QueG family. Monomer. Requires cob(II)alamin as cofactor. [4Fe-4S] cluster is required as a cofactor.

The protein resides in the cytoplasm. The enzyme catalyses epoxyqueuosine(34) in tRNA + AH2 = queuosine(34) in tRNA + A + H2O. The protein operates within tRNA modification; tRNA-queuosine biosynthesis. Catalyzes the conversion of epoxyqueuosine (oQ) to queuosine (Q), which is a hypermodified base found in the wobble positions of tRNA(Asp), tRNA(Asn), tRNA(His) and tRNA(Tyr). The polypeptide is Epoxyqueuosine reductase (Listeria monocytogenes serovar 1/2a (strain ATCC BAA-679 / EGD-e)).